Consider the following 556-residue polypeptide: CDP-diacylglycerol--glycerol-3-phosphate 3-phosphatidyltransferase, mitochondrial (556 aa).

A mitochondrion-targeting transit peptide spans 1 to 28 (MAVAAAAAAGPVFWRRLLGLLPGRPGLA). Ser-49 carries the phosphoserine modification. 124–131 (ASLYLGTG) contacts ATP. PLD phosphodiesterase domains lie at 215 to 241 (TIGL…SDSY) and 460 to 493 (RGWT…GYRS). Catalysis depends on residues His-220, Lys-222, and Asp-227.

Belongs to the CDP-alcohol phosphatidyltransferase class-II family.

The protein localises to the mitochondrion. It carries out the reaction a CDP-1,2-diacyl-sn-glycerol + sn-glycerol 3-phosphate = a 1,2-diacyl-sn-glycero-3-phospho-(1'-sn-glycero-3'-phosphate) + CMP + H(+). Its pathway is phospholipid metabolism; phosphatidylglycerol biosynthesis; phosphatidylglycerol from CDP-diacylglycerol: step 1/2. Activated by calcium and magnesium and inhibited by other bivalent cations. In terms of biological role, functions in the biosynthesis of the anionic phospholipids phosphatidylglycerol and cardiolipin. The sequence is that of CDP-diacylglycerol--glycerol-3-phosphate 3-phosphatidyltransferase, mitochondrial (PGS1) from Pongo abelii (Sumatran orangutan).